Here is a 353-residue protein sequence, read N- to C-terminus: Protein RecA (353 aa).

68–75 (GPESSGKT) is an ATP binding site.

This sequence belongs to the RecA family.

It is found in the cytoplasm. In terms of biological role, can catalyze the hydrolysis of ATP in the presence of single-stranded DNA, the ATP-dependent uptake of single-stranded DNA by duplex DNA, and the ATP-dependent hybridization of homologous single-stranded DNAs. It interacts with LexA causing its activation and leading to its autocatalytic cleavage. This Roseiflexus sp. (strain RS-1) protein is Protein RecA.